The sequence spans 491 residues: Proline--tRNA ligase (491 aa).

The protein belongs to the class-II aminoacyl-tRNA synthetase family. ProS type 3 subfamily. In terms of assembly, homodimer.

It localises to the cytoplasm. The catalysed reaction is tRNA(Pro) + L-proline + ATP = L-prolyl-tRNA(Pro) + AMP + diphosphate. Catalyzes the attachment of proline to tRNA(Pro) in a two-step reaction: proline is first activated by ATP to form Pro-AMP and then transferred to the acceptor end of tRNA(Pro). This Cytophaga hutchinsonii (strain ATCC 33406 / DSM 1761 / CIP 103989 / NBRC 15051 / NCIMB 9469 / D465) protein is Proline--tRNA ligase.